The primary structure comprises 156 residues: Small ribosomal subunit protein uS7 (156 aa).

Belongs to the universal ribosomal protein uS7 family. In terms of assembly, part of the 30S ribosomal subunit. Contacts proteins S9 and S11.

In terms of biological role, one of the primary rRNA binding proteins, it binds directly to 16S rRNA where it nucleates assembly of the head domain of the 30S subunit. Is located at the subunit interface close to the decoding center, probably blocks exit of the E-site tRNA. The chain is Small ribosomal subunit protein uS7 from Prochlorococcus marinus (strain MIT 9303).